The primary structure comprises 673 residues: Synaptotagmin-like protein 4 (673 aa).

The region spanning 4–122 (ILDLSFLSEM…KATGDWFYDQ (119 aa)) is the RabBD domain. The FYVE-type zinc finger occupies 63 to 105 (CARCQEGLGRLIPKSSTCVGCNHLVCRECRVLESNGSWRCKVC). Residues 184–253 (FEVPKTRSGK…PGNQNAVCGD (70 aa)) form a disordered region. Residues serine 202, serine 205, serine 218, serine 222, and serine 275 each carry the phosphoserine modification. The region spanning 358–480 (VTGKIAFSLK…KLDKKLDHCL (123 aa)) is the C2 1 domain. Serine 490 is modified (phosphoserine). The C2 2 domain maps to 509–635 (PASKLPVGGD…ISNGEVVDWM (127 aa)).

Part of a ternary complex containing STX1A and RAB27A. Can bind both dominant negative and dominant active mutants of RAB27A. Binds STXBP1, RAB3A, RAB8A and RAB27B. Interacts with MYO5A. Detected in the pancreatic islet, in particular in insulin-positive beta cells, and in pituitary.

It is found in the membrane. Its subcellular location is the cytoplasmic vesicle. The protein localises to the secretory vesicle membrane. Modulates exocytosis of dense-core granules and secretion of hormones in the pancreas and the pituitary. Interacts with vesicles containing negatively charged phospholipids in a Ca(2+)-independent manner. This is Synaptotagmin-like protein 4 (Sytl4) from Mus musculus (Mouse).